A 155-amino-acid chain; its full sequence is Photosystem I reaction center subunit XI (155 aa).

The next 2 membrane-spanning stretches (helical) occupy residues 80 to 102 (LISG…LVSF) and 117 to 139 (GWSQ…AFFL).

Belongs to the PsaL family.

The protein resides in the cellular thylakoid membrane. The polypeptide is Photosystem I reaction center subunit XI (Thermosynechococcus vestitus (strain NIES-2133 / IAM M-273 / BP-1)).